A 617-amino-acid polypeptide reads, in one-letter code: Pentatricopeptide repeat-containing protein At4g18520, chloroplastic (617 aa).

The N-terminal 19 residues, 1 to 19 (MFSLSLIQPRLRISEIPVT), are a transit peptide targeting the chloroplast. PPR repeat units follow at residues 116–146 (VIYFGNNLISSCVRLGDLVYARKVFDSMPEK), 147–181 (NTVTWTAMIDGYLKYGLEDEAFALFEDYVKHGIRF), 183–217 (NERMFVCLLNLCSRRAEFELGRQVHGNMVKVGVGN), 222–247 (SSLVYFYAQCGELTSALRAFDMMEEK), 248–282 (DVISWTAVISACSRKGHGIKAIGMFIGMLNHWFLP), 283–317 (NEFTVCSILKACSEEKALRFGRQVHSLVVKRMIKT), 318–348 (DVFVGTSLMDMYAKCGEISDCRKVFDGMSNR), 349–383 (NTVTWTSIIAAHAREGFGEEAISLFRIMKRRHLIA), 384–418 (NNLTVVSILRACGSVGALLLGKELHAQIIKNSIEK), 419–449 (NVYIGSTLVWLYCKCGESRDAFNVLQQLPSR), 450–484 (DVVSWTAMISGCSSLGHESEALDFLKEMIQEGVEP), 485–519 (NPFTYSSALKACANSESLLIGRSIHSIAKKNHALS), 520–550 (NVFVGSALIHMYAKCGFVSEAFRVFDSMPEK), and 551–585 (NLVSWKAMIMGYARNGFCREALKLMYRMEAEGFEV).

The protein belongs to the PPR family. PCMP-A subfamily. In terms of assembly, interacts with MORF8/RIP1, MORF2/RIP2 and MORF9/RIP9. As to expression, expressed specifically in aerial greening tissues, such as cotyledons, rosette leaves, cauline leaves, stems, sepals, stamens, carpels and siliques.

The protein localises to the plastid. It is found in the chloroplast. Its function is as follows. Required for proper chloroplast development. Involved in the regulation of plastid gene expression probably through regulation of plastid-encoded polymerase (PEP) dependent chloroplast transcription. Required for RNA editing of several chloroplastic transcripts, especially accD transcripts. Required for processing of the chloroplastic rpoA pre-mRNA. Required for the monocistronic rpoA transcript processing from the rpl23-rpl2-rps19-rpl22-rps3-rpl16-rpl14-rps8-rpl36-rps11-rpoA polycistron. Binds the intergenic sequence of rps11-rpoA for rpoA monocistronic RNA cleavage. This chain is Pentatricopeptide repeat-containing protein At4g18520, chloroplastic (PCMP-A2), found in Arabidopsis thaliana (Mouse-ear cress).